The primary structure comprises 130 residues: Lysozyme C (130 aa).

The region spanning 1–130 is the C-type lysozyme domain; it reads KIYERCELAR…LTPYIRGCGV (130 aa). 4 cysteine pairs are disulfide-bonded: cysteine 6-cysteine 128, cysteine 30-cysteine 116, cysteine 65-cysteine 81, and cysteine 77-cysteine 95. Residues glutamate 35 and aspartate 53 contribute to the active site.

It belongs to the glycosyl hydrolase 22 family. In terms of assembly, monomer.

It localises to the secreted. The enzyme catalyses Hydrolysis of (1-&gt;4)-beta-linkages between N-acetylmuramic acid and N-acetyl-D-glucosamine residues in a peptidoglycan and between N-acetyl-D-glucosamine residues in chitodextrins.. Lysozymes have primarily a bacteriolytic function; those in tissues and body fluids are associated with the monocyte-macrophage system and enhance the activity of immunoagents. This Oryctolagus cuniculus (Rabbit) protein is Lysozyme C (LYZ).